The following is a 381-amino-acid chain: cAMP-dependent protein kinase type I-beta regulatory subunit (381 aa).

Residues 1–136 (MASPSCFHSE…ALAKAISKNV (136 aa)) are dimerization and phosphorylation. At Ser3 the chain carries Phosphoserine. At Tyr21 the chain carries 3'-nitrotyrosine. The interval 66–88 (LARQKSNSQCDSHDEEISPTPPN) is disordered. Residues Ser77 and Ser83 each carry the phosphoserine modification. A Phosphothreonine modification is found at Thr85. The short motif at 96–100 (RRGGV) is the Pseudophosphorylation motif element. Arg97 bears the Omega-N-methylarginine mark. Residues 137 to 254 (LFSH…SKVS), Glu202, Arg211, 255 to 381 (ILES…SLTV), Glu326, and Arg335 each bind 3',5'-cyclic AMP.

The protein belongs to the cAMP-dependent kinase regulatory chain family. In terms of assembly, the inactive holoenzyme is composed of two regulatory chains and two catalytic chains. Activation by cAMP releases the two active catalytic monomers and the regulatory dimer. Interacts with PRKX; regulates this cAMP-dependent protein kinase. Interacts with smAKAP; this interaction may target PRKAR1B to the plasma membrane. The pseudophosphorylation site binds to the substrate-binding region of the catalytic chain, resulting in the inhibition of its activity. In terms of tissue distribution, abundant in brain and testis. No expression in lung, heart, liver, spleen, kidney and skeletal muscle.

The protein localises to the cell membrane. Regulatory subunit of the cAMP-dependent protein kinases involved in cAMP signaling in cells. This chain is cAMP-dependent protein kinase type I-beta regulatory subunit (Prkar1b), found in Rattus norvegicus (Rat).